A 180-amino-acid polypeptide reads, in one-letter code: Large ribosomal subunit protein uL6 (180 aa).

It belongs to the universal ribosomal protein uL6 family. In terms of assembly, part of the 50S ribosomal subunit.

Functionally, this protein binds to the 23S rRNA, and is important in its secondary structure. It is located near the subunit interface in the base of the L7/L12 stalk, and near the tRNA binding site of the peptidyltransferase center. The protein is Large ribosomal subunit protein uL6 of Dictyoglomus turgidum (strain DSM 6724 / Z-1310).